Consider the following 447-residue polypeptide: ATP-dependent protease ATPase subunit HslU (447 aa).

Residues isoleucine 18, 60 to 65, aspartate 259, glutamate 325, and arginine 397 contribute to the ATP site; that span reads GVGKTE.

The protein belongs to the ClpX chaperone family. HslU subfamily. In terms of assembly, a double ring-shaped homohexamer of HslV is capped on each side by a ring-shaped HslU homohexamer. The assembly of the HslU/HslV complex is dependent on binding of ATP.

It localises to the cytoplasm. ATPase subunit of a proteasome-like degradation complex; this subunit has chaperone activity. The binding of ATP and its subsequent hydrolysis by HslU are essential for unfolding of protein substrates subsequently hydrolyzed by HslV. HslU recognizes the N-terminal part of its protein substrates and unfolds these before they are guided to HslV for hydrolysis. This is ATP-dependent protease ATPase subunit HslU from Burkholderia lata (strain ATCC 17760 / DSM 23089 / LMG 22485 / NCIMB 9086 / R18194 / 383).